A 42-amino-acid polypeptide reads, in one-letter code: Protein YkgS (42 aa).

The protein is Protein YkgS (ykgS) of Escherichia coli (strain K12).